Consider the following 64-residue polypeptide: Large ribosomal subunit protein bL35 (64 aa).

It belongs to the bacterial ribosomal protein bL35 family.

The protein is Large ribosomal subunit protein bL35 of Levilactobacillus brevis (strain ATCC 367 / BCRC 12310 / CIP 105137 / JCM 1170 / LMG 11437 / NCIMB 947 / NCTC 947) (Lactobacillus brevis).